We begin with the raw amino-acid sequence, 907 residues long: Eukaryotic translation initiation factor 4 gamma 2 (907 aa).

N-acetylmethionine is present on M1. A disordered region spans residues 1–71; it reads MESAIAEGGA…SAANNSANEK (71 aa). A Phosphoserine modification is found at S11. Positions 78–308 constitute an MIF4G domain; sequence FRKVRGILNK…QDTVELREHH (231 aa). T89 bears the Phosphothreonine mark. Position 360 is an omega-N-methylarginine (R360). Position 395 is a phosphoserine (S395). K431 carries the N6-methyllysine modification. S443 carries the phosphoserine modification. Positions 498 to 541 are disordered; it reads PPSAQPPRTQTPPLGQTPQLGLKTNPPLIQEKPAKTSKKPPPSK. Residues 503 to 516 show a composition bias toward polar residues; that stretch reads PPRTQTPPLGQTPQ. R505 is modified (omega-N-methylarginine). Phosphothreonine is present on residues T508 and T514. One can recognise an MI domain in the interval 543-666; that stretch reads ELLKLTETVV…SISELAQPLE (124 aa). K575 is covalently cross-linked (Glycyl lysine isopeptide (Lys-Gly) (interchain with G-Cter in SUMO2)). The W2 domain maps to 720–904; the sequence is EGKGLSFLFP…ETAEEEESEE (185 aa). S902 carries the phosphoserine modification.

This sequence belongs to the eukaryotic initiation factor 4G family. In terms of assembly, interacts with the serine/threonine protein kinases MKNK1 and MKNK2. Binds EIF4A and EIF3. Interacts with MIF4GD. Interacts with DAZAP2. In terms of processing, phosphorylation; hyperphosphorylated during mitosis.

Functionally, appears to play a role in the switch from cap-dependent to IRES-mediated translation during mitosis, apoptosis and viral infection. Cleaved by some caspases and viral proteases. The protein is Eukaryotic translation initiation factor 4 gamma 2 of Oryctolagus cuniculus (Rabbit).